A 105-amino-acid chain; its full sequence is Nucleoid-associated protein Ccur92_18190 (105 aa).

This sequence belongs to the YbaB/EbfC family. As to quaternary structure, homodimer.

Its subcellular location is the cytoplasm. It localises to the nucleoid. Functionally, binds to DNA and alters its conformation. May be involved in regulation of gene expression, nucleoid organization and DNA protection. This Campylobacter curvus (strain 525.92) protein is Nucleoid-associated protein Ccur92_18190.